A 426-amino-acid chain; its full sequence is Serine--tRNA ligase (426 aa).

Residues 44–67 (TEKQALQSERNATSKQIGMLKKKG) form a disordered region. Polar residues predominate over residues 47–59 (QALQSERNATSKQ). L-serine is bound at residue 231 to 233 (TAE). Residues 262 to 264 (RRE) and valine 278 each bind ATP. Residue glutamate 285 coordinates L-serine. Position 349–352 (349–352 (EVSS)) interacts with ATP. Position 384 (serine 384) interacts with L-serine.

It belongs to the class-II aminoacyl-tRNA synthetase family. Type-1 seryl-tRNA synthetase subfamily. Homodimer. The tRNA molecule binds across the dimer.

The protein localises to the cytoplasm. It catalyses the reaction tRNA(Ser) + L-serine + ATP = L-seryl-tRNA(Ser) + AMP + diphosphate + H(+). The catalysed reaction is tRNA(Sec) + L-serine + ATP = L-seryl-tRNA(Sec) + AMP + diphosphate + H(+). It functions in the pathway aminoacyl-tRNA biosynthesis; selenocysteinyl-tRNA(Sec) biosynthesis; L-seryl-tRNA(Sec) from L-serine and tRNA(Sec): step 1/1. Its function is as follows. Catalyzes the attachment of serine to tRNA(Ser). Is also able to aminoacylate tRNA(Sec) with serine, to form the misacylated tRNA L-seryl-tRNA(Sec), which will be further converted into selenocysteinyl-tRNA(Sec). This chain is Serine--tRNA ligase, found in Akkermansia muciniphila (strain ATCC BAA-835 / DSM 22959 / JCM 33894 / BCRC 81048 / CCUG 64013 / CIP 107961 / Muc).